We begin with the raw amino-acid sequence, 215 residues long: MPHSQTSAPRGRVRLARGASPWLLPTVATAALSLVRARRSGAAKAVAVPATALAAGMLWFFRDPEREITQGRVISPADGVVQSIMPWKDGRTRVAIFMSPLNVHVNRAPLSGTVTSVEHIPGGFVPAFNKESENNERVVWHFDTELGDIEMIQIAGAVARRIVPYVPQGTKVEQGDRIGLIRFGSRVDIYLPEGVDVDVEVGQKTVAGVTRIDRD.

Serine 185 serves as the catalytic Schiff-base intermediate with substrate; via pyruvic acid. The residue at position 185 (serine 185) is a Pyruvic acid (Ser); by autocatalysis.

This sequence belongs to the phosphatidylserine decarboxylase family. PSD-A subfamily. Heterodimer of a large membrane-associated beta subunit and a small pyruvoyl-containing alpha subunit. The cofactor is pyruvate. In terms of processing, is synthesized initially as an inactive proenzyme. Formation of the active enzyme involves a self-maturation process in which the active site pyruvoyl group is generated from an internal serine residue via an autocatalytic post-translational modification. Two non-identical subunits are generated from the proenzyme in this reaction, and the pyruvate is formed at the N-terminus of the alpha chain, which is derived from the carboxyl end of the proenzyme. The post-translation cleavage follows an unusual pathway, termed non-hydrolytic serinolysis, in which the side chain hydroxyl group of the serine supplies its oxygen atom to form the C-terminus of the beta chain, while the remainder of the serine residue undergoes an oxidative deamination to produce ammonia and the pyruvoyl prosthetic group on the alpha chain.

Its subcellular location is the cell membrane. It catalyses the reaction a 1,2-diacyl-sn-glycero-3-phospho-L-serine + H(+) = a 1,2-diacyl-sn-glycero-3-phosphoethanolamine + CO2. It participates in phospholipid metabolism; phosphatidylethanolamine biosynthesis; phosphatidylethanolamine from CDP-diacylglycerol: step 2/2. In terms of biological role, catalyzes the formation of phosphatidylethanolamine (PtdEtn) from phosphatidylserine (PtdSer). The chain is Phosphatidylserine decarboxylase proenzyme from Streptomyces avermitilis (strain ATCC 31267 / DSM 46492 / JCM 5070 / NBRC 14893 / NCIMB 12804 / NRRL 8165 / MA-4680).